Reading from the N-terminus, the 516-residue chain is 1-pyrroline-5-carboxylate dehydrogenase (516 aa).

Catalysis depends on residues glutamate 287 and cysteine 321.

The protein belongs to the aldehyde dehydrogenase family. RocA subfamily.

The enzyme catalyses L-glutamate 5-semialdehyde + NAD(+) + H2O = L-glutamate + NADH + 2 H(+). Its pathway is amino-acid degradation; L-proline degradation into L-glutamate; L-glutamate from L-proline: step 2/2. In Bacillus licheniformis (strain ATCC 14580 / DSM 13 / JCM 2505 / CCUG 7422 / NBRC 12200 / NCIMB 9375 / NCTC 10341 / NRRL NRS-1264 / Gibson 46), this protein is 1-pyrroline-5-carboxylate dehydrogenase.